The sequence spans 320 residues: MLSRRNPQLNNHGELIHLLSTEGLPRAVLTQILDTASTFLSVNDRDVKKVPLLRGKSVFNLFFENSTRTRTTFEIAAKRLSADVINLDIAKSSAAKGESLLDTIANLSAMHADMFVVRHSESGAPYLIAEHCAPHVHVVNAGDGRHAHPTQGLLDMYTIRHYKKDFTGLRVAIVGDIVHSRVARSDIHALTTLGVPDIRAVGPKTLVPGDLRDMGVRVCHDMAEGIKDADVIIMLRLQNERMSGAMLPSAGEYFKSYGLTADKLALAAPDCIVMHPGPINRGVEIESTVADGAHSVILPQVTFGIAVRMAVMSIIAGNDA.

R68 and T69 together coordinate carbamoyl phosphate. Residue K96 participates in L-aspartate binding. Carbamoyl phosphate-binding residues include R118, H148, and Q151. The L-aspartate site is built by R181 and R236. G277 and P278 together coordinate carbamoyl phosphate.

This sequence belongs to the aspartate/ornithine carbamoyltransferase superfamily. ATCase family. Heterododecamer (2C3:3R2) of six catalytic PyrB chains organized as two trimers (C3), and six regulatory PyrI chains organized as three dimers (R2).

It carries out the reaction carbamoyl phosphate + L-aspartate = N-carbamoyl-L-aspartate + phosphate + H(+). It participates in pyrimidine metabolism; UMP biosynthesis via de novo pathway; (S)-dihydroorotate from bicarbonate: step 2/3. Functionally, catalyzes the condensation of carbamoyl phosphate and aspartate to form carbamoyl aspartate and inorganic phosphate, the committed step in the de novo pyrimidine nucleotide biosynthesis pathway. This Leptothrix cholodnii (strain ATCC 51168 / LMG 8142 / SP-6) (Leptothrix discophora (strain SP-6)) protein is Aspartate carbamoyltransferase catalytic subunit.